A 159-amino-acid polypeptide reads, in one-letter code: Ribosomal RNA large subunit methyltransferase H (159 aa).

S-adenosyl-L-methionine is bound by residues L76, G108, and 127–132 (FGKLTM).

Belongs to the RNA methyltransferase RlmH family. Homodimer.

It is found in the cytoplasm. It carries out the reaction pseudouridine(1915) in 23S rRNA + S-adenosyl-L-methionine = N(3)-methylpseudouridine(1915) in 23S rRNA + S-adenosyl-L-homocysteine + H(+). Its function is as follows. Specifically methylates the pseudouridine at position 1915 (m3Psi1915) in 23S rRNA. This Lactobacillus delbrueckii subsp. bulgaricus (strain ATCC 11842 / DSM 20081 / BCRC 10696 / JCM 1002 / NBRC 13953 / NCIMB 11778 / NCTC 12712 / WDCM 00102 / Lb 14) protein is Ribosomal RNA large subunit methyltransferase H.